A 1318-amino-acid polypeptide reads, in one-letter code: Putative tetratricopeptide repeat protein 41 (1318 aa).

TPR repeat units lie at residues 399–432 (TQLETDILNEDSDGLVFSFLVEVFIASISLKPCI), 653–684 (WVQEKPNGLLYFWHQSLSAVEHKLLGVITPVE), 817–850 (CRLMFFIGSFLKFMGKTNEAEELFLSVEDMLVQS), 858–891 (LKVQNAIGELYLETGMTQEGFQYFQKAWSSMLRL), 991–1027 (MEFLADLLFFPQRDSKKSQRKQVLKYYKQVIKIKENA), and 1045–1082 (SDTLCKLAGHLLASDSCHHVMIEAVGYLYRSVDLRVIH).

The protein localises to the cytoplasm. The chain is Putative tetratricopeptide repeat protein 41 from Homo sapiens (Human).